A 201-amino-acid chain; its full sequence is MTTIASLVLAYLLGSVPFAVLVSLGMGLADPRSYGSGNPGATNVLRSGNKLAALLTLLGDAAKGWLAVWLAQTYGASFGLAAPEIAMVGLAVFIGHLWPVFLAFRGGKGVATALGVLLAVNPWLALIAAAVWLAVALLTRYSSLAAMVSAVATAVAAWFIEPGVYAGLTIVIALLLVRRHKQNILNLVSGTESRIGGKKKS.

4 helical membrane passes run 4–24 (IASL…LVSL), 84–104 (EIAM…FLAF), 116–136 (VLLA…LAVA), and 157–177 (AWFI…LLLV).

Belongs to the PlsY family. Probably interacts with PlsX.

It localises to the cell inner membrane. It catalyses the reaction an acyl phosphate + sn-glycerol 3-phosphate = a 1-acyl-sn-glycero-3-phosphate + phosphate. It participates in lipid metabolism; phospholipid metabolism. In terms of biological role, catalyzes the transfer of an acyl group from acyl-phosphate (acyl-PO(4)) to glycerol-3-phosphate (G3P) to form lysophosphatidic acid (LPA). This enzyme utilizes acyl-phosphate as fatty acyl donor, but not acyl-CoA or acyl-ACP. The polypeptide is Glycerol-3-phosphate acyltransferase (Laribacter hongkongensis (strain HLHK9)).